The primary structure comprises 287 residues: NAD kinase (287 aa).

Residue Asp70 is the Proton acceptor of the active site. Residues 70–71 (DG), 144–145 (ND), Arg155, Lys172, Asp174, 185–190 (TAYSLS), and Gln244 each bind NAD(+).

It belongs to the NAD kinase family. The cofactor is a divalent metal cation.

Its subcellular location is the cytoplasm. The enzyme catalyses NAD(+) + ATP = ADP + NADP(+) + H(+). Its function is as follows. Involved in the regulation of the intracellular balance of NAD and NADP, and is a key enzyme in the biosynthesis of NADP. Catalyzes specifically the phosphorylation on 2'-hydroxyl of the adenosine moiety of NAD to yield NADP. The protein is NAD kinase of Solibacter usitatus (strain Ellin6076).